The primary structure comprises 574 residues: Secreted lipase 1 (574 aa).

The first 17 residues, 1 to 17 (MKLSLVPIFALLSTAFA), serve as a signal peptide directing secretion. A disulfide bridge connects residues C95 and C132. Residue S244 is the Acyl-ester intermediate of the active site. A disulfide bridge links C303 with C312. N-linked (GlcNAc...) asparagine glycosylation is present at N323. E376 functions as the Charge relay system in the catalytic mechanism. N386 carries an N-linked (GlcNAc...) asparagine glycan. H489 serves as the catalytic Charge relay system. Residue N524 is glycosylated (N-linked (GlcNAc...) asparagine).

The protein belongs to the type-B carboxylesterase/lipase family.

The protein resides in the secreted. The catalysed reaction is a carboxylic ester + H2O = an alcohol + a carboxylate + H(+). Its function is as follows. Secreted lipase that allows the use of hydrolyzed lipids as carbon sources. Has highest activity with methyl umbelliferyl oleate (C18:1), whereas much lower activities are obtained with the respective esters of palmitate (C16:0) and stearate (C18:0) (24% and 12% of the activity obtained with umbelliferyl oleate, respectively). Hydrolyzes 1- and 3-positioned ester bonds in preference to 2-positioned ester bonds. The production rate of monoglycerides is lower than that of diacylglycerides. Seems not required for the penetration of intact host tissue. This Botryotinia fuckeliana (strain B05.10) (Noble rot fungus) protein is Secreted lipase 1.